The sequence spans 485 residues: Ataxin-10 (485 aa).

The protein belongs to the ataxin-10 family.

The protein resides in the cytoplasm. It is found in the perinuclear region. The protein localises to the midbody. Its function is as follows. May play a role in the regulation of cytokinesis. May play a role in signaling by stimulating protein glycosylation. Induces neuritogenesis by activating the Ras-MAP kinase pathway and is necessary for the survival of cerebellar neurons. Does not appear to play a major role in ciliogenesis. The protein is Ataxin-10 (atxn10) of Xenopus tropicalis (Western clawed frog).